The following is an 839-amino-acid chain: Taste receptor type 1 member 2 (839 aa).

A signal peptide spans 1–19; it reads MRPRATTICSLFFLLRVLA. Residues 20–566 lie on the Extracellular side of the membrane; the sequence is EPAKNSDFYL…AFLEWHEAPT (547 aa). N-linked (GlcNAc...) asparagine glycosylation is found at Asn-84, Asn-127, Asn-248, Asn-292, Asn-312, Asn-368, Asn-428, Asn-487, and Asn-527. A helical membrane pass occupies residues 567–587; it reads IVVALLAALGFLSTLAILVIF. At 588-602 the chain is on the cytoplasmic side; the sequence is WRHFQTPMVRSAGGP. The chain crosses the membrane as a helical span at residues 603-623; it reads MCFLMLTLLLVAYMVVPVYVG. Topologically, residues 624–635 are extracellular; sequence PPKVSTCFCRQA. Residues 636–656 traverse the membrane as a helical segment; sequence LFPLCFTICISCIAVRSFQIV. Residues 657–681 are Cytoplasmic-facing; sequence CVFKMASRFPRAYSYWVRYQGPYVS. The chain crosses the membrane as a helical span at residues 682–702; that stretch reads MAFITVLKMVTVVIGMLATGL. Residues 703–727 are Extracellular-facing; the sequence is NPTTRIDPDDPKIMIVSCNPNYRNS. Residues 728–748 traverse the membrane as a helical segment; that stretch reads LFFNTGLDLLLSVVGFSFAYM. Residues 749 to 760 lie on the Cytoplasmic side of the membrane; the sequence is GKELPTNYNEAK. A helical transmembrane segment spans residues 761 to 781; it reads FITLSMTFYFTSSVSLCTFMS. Residues 782–784 are Extracellular-facing; the sequence is AYN. A helical membrane pass occupies residues 785 to 805; it reads GVLVTIMDLLVTVLNLLAISL. The Cytoplasmic portion of the chain corresponds to 806 to 839; it reads GYFGPKCYMILFYPERNTPAYFNSMIQGYTMRRD.

Belongs to the G-protein coupled receptor 3 family. TAS1R subfamily. In terms of assembly, forms heterodimers with TAS1R3.

The protein resides in the cell membrane. Putative taste receptor. TAS1R2/TAS1R3 recognizes diverse natural and synthetic sweeteners. In Macaca mulatta (Rhesus macaque), this protein is Taste receptor type 1 member 2 (TAS1R2).